We begin with the raw amino-acid sequence, 166 residues long: EIGSTIPNATFAYVPYSPELEDHKVCGMPTSFQSHERWKGKKVVIVAVPGAFTPTCTANHVPPYVEKIQELKSKGVDEVVVISANDPFVLSAWGITEHAKDNLTFAQDVNCEFSKHFNATLDLSSKGMGLRTARYALIANDLKVEYFGIDEGEPKQSSAATVLSKL.

The region spanning 1–166 (EIGSTIPNAT…SSAATVLSKL (166 aa)) is the Thioredoxin domain. The Cysteine sulfenic acid (-SOH) intermediate role is filled by Cys56. The Microbody targeting signal signature appears at 164-166 (SKL).

Belongs to the peroxiredoxin family. Prx5 subfamily. As to quaternary structure, homodimer; disulfide-linked, upon oxidation.

The enzyme catalyses a hydroperoxide + [thioredoxin]-dithiol = an alcohol + [thioredoxin]-disulfide + H2O. Functionally, thiol-specific peroxidase that catalyzes the reduction of hydrogen peroxide and organic hydroperoxides to water and alcohols, respectively. Plays a role in cell protection against oxidative stress by detoxifying peroxides and as sensor of hydrogen peroxide-mediated signaling events. The protein is Putative peroxiredoxin of Malassezia furfur (Pityriasis versicolor infection agent).